A 118-amino-acid chain; its full sequence is UPF0295 protein BCE33L0445 (118 aa).

The next 2 helical transmembrane spans lie at 12 to 32 (IRTF…LGVF) and 43 to 63 (FMMV…WIGM).

The protein belongs to the UPF0295 family.

The protein resides in the cell membrane. This Bacillus cereus (strain ZK / E33L) protein is UPF0295 protein BCE33L0445.